Here is a 307-residue protein sequence, read N- to C-terminus: MAAITASMVGELRAKTDAPMMECKKALTEADGNMEKAEELLRIKLGNKAGKASGRITAEGVVTAFVDGAAGGMIEINCETDFVTKNDSFLAMANAAAMLVAKHNPADIAALGALPYEQDGFGPTLEDVRKGLIGKIGENMSFRRFKHFAGNGKLASYLHGTRIGVMVEFEGDDTSAKDVAMHIAAMKPVAIQASDVPADLIEKERAVAAGKAEEDRKTAEAEGKKPQPAEIVAKRIEGGVQKYLKEVSLHNQPFVKNDKQTVEQMLKAANTSIKGFTLYVVGEGIEKKVDDFAAEVAAQVAAAKAAA.

Positions 80–83 (TDFV) are involved in Mg(2+) ion dislocation from EF-Tu.

It belongs to the EF-Ts family.

The protein localises to the cytoplasm. Functionally, associates with the EF-Tu.GDP complex and induces the exchange of GDP to GTP. It remains bound to the aminoacyl-tRNA.EF-Tu.GTP complex up to the GTP hydrolysis stage on the ribosome. The chain is Elongation factor Ts from Variovorax paradoxus (strain S110).